We begin with the raw amino-acid sequence, 743 residues long: Probable TonB-dependent siderophore receptor PiuA (743 aa).

The signal sequence occupies residues Met1–Ala28. Residues Pro61–Lys167 enclose the TBDR plug domain. Positions Gly172–Tyr743 constitute a TBDR beta-barrel domain. Disulfide bonds link Cys408–Cys416 and Cys627–Cys632.

It belongs to the TonB-dependent receptor family.

It localises to the cell outer membrane. In terms of biological role, probably involved in the initial step of iron uptake by binding iron chelating siderophores, thereby allowing extraction of iron from the environment. May bind the siderophore, ferric enterobactin, with micromolar affinity. The protein is Probable TonB-dependent siderophore receptor PiuA of Acinetobacter baumannii (strain ATCC 19606 / DSM 30007 / JCM 6841 / CCUG 19606 / CIP 70.34 / NBRC 109757 / NCIMB 12457 / NCTC 12156 / 81).